Consider the following 37-residue polypeptide: Large ribosomal subunit protein bL36 (37 aa).

Belongs to the bacterial ribosomal protein bL36 family.

The polypeptide is Large ribosomal subunit protein bL36 (Psychromonas ingrahamii (strain DSM 17664 / CCUG 51855 / 37)).